Reading from the N-terminus, the 473-residue chain is Probable transporter MCH2 (473 aa).

Residues 1–37 are Cytoplasmic-facing; the sequence is MSEERHEDHHRDVENKLNLNGKDDINGNTSISIEVPD. The helical transmembrane segment at 38-58 threads the bilayer; that stretch reads GGYGWFILLAFILYNFSTWGA. The Extracellular portion of the chain corresponds to 59–83; the sequence is NSGYAIYLAHYLENNTFAGGSKLDY. Asn-72 is a glycosylation site (N-linked (GlcNAc...) asparagine). Residues 84–105 traverse the membrane as a helical segment; it reads ASIGGLAFSCGLFFAPVITWLY. The Cytoplasmic segment spans residues 106–111; it reads HIFSIQ. The chain crosses the membrane as a helical span at residues 112–135; it reads FIIGLGILFQGAALLLAAFSVTLW. The Extracellular segment spans residues 136–141; sequence EIYLTQ. Residues 142–163 form a helical membrane-spanning segment; sequence GVLIGFGLAFIFIPSVTLIPLW. Topologically, residues 164–169 are cytoplasmic; that stretch reads FRNKRS. Residues 170 to 186 form a helical membrane-spanning segment; that stretch reads LASGIGTAGSGLGGIVF. The Extracellular portion of the chain corresponds to 187–200; the sequence is NLGMQSILQKRGVK. Residues 201–220 form a helical membrane-spanning segment; sequence WALIAQCIICTSLSTIALML. At 221–243 the chain is on the cytoplasmic side; sequence TRTTHQGLRQHKRSYKFELLDYD. The helical transmembrane segment at 244–268 threads the bilayer; it reads VLSNFAVWLLFGFVSFAMLGYVVLL. Over 269-286 the chain is Extracellular; it reads YSLSDFTVSLGYTSKQGS. The chain crosses the membrane as a helical span at residues 287-304; the sequence is YVSCMVSVGSLLGRPIVG. The Cytoplasmic portion of the chain corresponds to 305–312; that stretch reads HIADKYGS. A helical membrane pass occupies residues 313–332; it reads LTVGMILHLVMAILCWAMWI. Topologically, residues 333 to 342 are extracellular; it reads PCKNLATAIA. The chain crosses the membrane as a helical span at residues 343–362; sequence FGLLVGSIMGTIWPTIASIV. At 363-370 the chain is on the cytoplasmic side; sequence TRIVGLQK. A helical transmembrane segment spans residues 371 to 394; that stretch reads LPGTFGSTWIFMAAFALVAPIIGL. Topologically, residues 395 to 408 are extracellular; sequence ELRSTDTNGNDYYR. The chain crosses the membrane as a helical span at residues 409–433; that stretch reads TAIFVGFAYFGVSLCQWLLRGFIIA. Over 434 to 473 the chain is Cytoplasmic; the sequence is RDEIAVREAYSADQNELHLNVKLSHMSKCLFRYKQLPRRV.

The protein belongs to the major facilitator superfamily. Monocarboxylate porter (TC 2.A.1.13) family.

The protein resides in the membrane. Probable transporter. Does not act in the transport of monocarboxylic acids across the plasma membrane. This Saccharomyces cerevisiae (strain ATCC 204508 / S288c) (Baker's yeast) protein is Probable transporter MCH2 (MCH2).